The chain runs to 413 residues: Protein arginine N-methyltransferase 2 (413 aa).

Disordered regions lie at residues 65 to 85 (DDEE…QKSV) and 148 to 178 (ELED…SAPQ). Over residues 148–173 (ELEDDDEEEEEGQEEQTGTEEVEVEG) the composition is skewed to acidic residues. The 222-residue stretch at 192–413 (TGPDVTNSRY…YRLPLCKYMD (222 aa)) folds into the RMT2 domain. S-adenosyl-L-methionine is bound by residues Y201, M230, 250-255 (HGMGIV), 271-273 (EAH), 298-299 (WQ), and D318.

This sequence belongs to the class I-like SAM-binding methyltransferase superfamily. RMT2 methyltransferase family. As to quaternary structure, monomer.

The protein resides in the cytoplasm. The protein localises to the nucleus. In terms of biological role, S-adenosyl-L-methionine-dependent protein-arginine N-methyltransferase that methylates the delta-nitrogen atom of arginine residues to form N5-methylarginine (type IV) in target proteins. Monomethylates ribosomal protein L12. This Aspergillus oryzae (strain ATCC 42149 / RIB 40) (Yellow koji mold) protein is Protein arginine N-methyltransferase 2.